The sequence spans 380 residues: Cytochrome b (380 aa).

4 consecutive transmembrane segments (helical) span residues 34 to 54 (FGSLLGICLMTQILTGLLLAM), 78 to 99 (WLIRNLHANGASFFFICIYFHI), 114 to 134 (WNTGVILLLTLMATAFVGYVL), and 179 to 199 (FFALHFLLPFMIAGLTLIHLT). Positions 84 and 98 each coordinate heme b. The heme b site is built by His-183 and His-197. His-202 contributes to the a ubiquinone binding site. The next 4 membrane-spanning stretches (helical) occupy residues 227–247 (LKDILGFTLMFLPLTTLALFS), 289–309 (LGGVLALAASVLILFLIPFLH), 321–341 (ISQLLFWILVANLLILTWVGS), and 348–368 (FIIIGQLASVTYFTILLVLFP).

It belongs to the cytochrome b family. As to quaternary structure, the cytochrome bc1 complex contains 11 subunits: 3 respiratory subunits (MT-CYB, CYC1 and UQCRFS1), 2 core proteins (UQCRC1 and UQCRC2) and 6 low-molecular weight proteins (UQCRH/QCR6, UQCRB/QCR7, UQCRQ/QCR8, UQCR10/QCR9, UQCR11/QCR10 and a cleavage product of UQCRFS1). This cytochrome bc1 complex then forms a dimer. Heme b is required as a cofactor.

The protein localises to the mitochondrion inner membrane. In terms of biological role, component of the ubiquinol-cytochrome c reductase complex (complex III or cytochrome b-c1 complex) that is part of the mitochondrial respiratory chain. The b-c1 complex mediates electron transfer from ubiquinol to cytochrome c. Contributes to the generation of a proton gradient across the mitochondrial membrane that is then used for ATP synthesis. The chain is Cytochrome b (MT-CYB) from Pachyptila salvini (Salvin's prion).